The following is a 461-amino-acid chain: Putative 2,3-dihydroxypropane-1-sulfonate exporter (461 aa).

Residues 1–20 (MSHITTEDPATLRLPFKEKL) lie on the Cytoplasmic side of the membrane. The helical transmembrane segment at 21-41 (SYGIGDLASNILLDIGTLYLL) threads the bilayer. Over 42–47 (KFYTDV) the chain is Periplasmic. Residues 48–68 (LGLPGTYGGIIFLISKFFTAF) form a helical membrane-spanning segment. The Cytoplasmic portion of the chain corresponds to 69 to 92 (TDMGTGIMLDSRRKIGPKGKFRPF). A helical membrane pass occupies residues 93–113 (ILYASFPVTLLAIANFVGTPF). Residues 114–123 (DVTGKTVMAT) are Periplasmic-facing. A helical transmembrane segment spans residues 124–144 (ILFMLYGLFFSMMNCSYGAMV). Residues 145–162 (PAITKNPNERASLAAWRQ) are Cytoplasmic-facing. A helical membrane pass occupies residues 163–183 (GGATLGLLLCTVGFVPVMNLI). Over 184–188 (EGNQQ) the chain is Periplasmic. A helical transmembrane segment spans residues 189 to 209 (LGYIFAATLFSLFGLLFMWIC). Residues 210–243 (YSGVKERYVETQPANPAQKPGLLQSFRAIAGNRP) lie on the Cytoplasmic side of the membrane. The helical transmembrane segment at 244-264 (LFILCIANLCTLGAFNVKLAI) threads the bilayer. Residues 265 to 276 (QVYYTQYVLNDP) are Periplasmic-facing. A helical membrane pass occupies residues 277-297 (ILLSYMGFFSMGCIFIGVFLM). Residues 298–308 (PASVRRFGKKK) lie on the Cytoplasmic side of the membrane. A helical membrane pass occupies residues 309–329 (VYIGGLLIWVLGDLLNYFFGG). Glycine 330 is a topological domain (periplasmic). A helical transmembrane segment spans residues 331–351 (SVSFVAFSCLAFFGSAFVNSL). Topologically, residues 352–387 (NWALVSDTVEYGEWRTGVRSEGTVYTGFTFFRKVSQ) are cytoplasmic. A helical transmembrane segment spans residues 388–408 (ALAGFFPGWMLTQIGYVPNVA). The Periplasmic segment spans residues 409–419 (QADHTIEGLRQ). A helical transmembrane segment spans residues 420–440 (LIFIYPSALAVVTIVAMGCFY). Topologically, residues 441–461 (SLNEKMYVRIVEEIEARKRTA) are cytoplasmic.

It belongs to the sodium:galactoside symporter (TC 2.A.2) family.

The protein resides in the cell inner membrane. In terms of biological role, could be involved in the export of 2,3-dihydroxypropane-1-sulfonate (DHPS). This is Putative 2,3-dihydroxypropane-1-sulfonate exporter (yihP) from Escherichia coli (strain K12).